Consider the following 238-residue polypeptide: Ribonuclease-like storage protein (238 aa).

Residues methionine 1–alanine 23 form the signal peptide. RNA is bound at residue glutamine 37. Cysteines 43 and 49 form a disulfide. Residues histidine 61, phenylalanine 109, histidine 112–glutamate 113, and lysine 116–histidine 117 contribute to the RNA site. Histidine 61 serves as the catalytic Proton donor. 2 cysteine pairs are disulfide-bonded: cysteine 76-cysteine 120 and cysteine 196-cysteine 207. Residue glutamate 113 is part of the active site. Histidine 117 acts as the Proton acceptor in catalysis.

The protein belongs to the RNase T2 family. In terms of assembly, homodimer. Root.

Its function is as follows. May act as a storage protein providing a nitrogen source. Seems to have no RNase activity although it has conserved the active site residues. This is Ribonuclease-like storage protein from Panax ginseng (Korean ginseng).